The primary structure comprises 670 residues: Zinc finger protein 526 (670 aa).

3 C2H2-type zinc fingers span residues 57-79, 108-130, and 140-163; these read FMCS…QEQH, FQCG…QDAH, and YQCW…KAQH. Disordered stretches follow at residues 168-196 and 217-304; these read VAEP…KMEP and GTHF…ATHP. Residues 171–189 are compositionally biased toward pro residues; sequence PPVPPPLPPPTPLPPPSPP. The C2H2-type 4 zinc finger occupies 197–219; that stretch reads YECPECSTLCATPEEFLEHQGTH. A compositionally biased stretch (basic and acidic residues) spans 217–231; that stretch reads GTHFDSLEKEERNGL. Residues 232–263 are compositionally biased toward acidic residues; the sequence is EEEEEDDEEDEEDDEEMEDEEAMAEVGDDAVG. 9 consecutive C2H2-type zinc fingers follow at residues 305–327, 332–354, 360–382, 388–409, 442–465, 472–494, 500–522, 528–550, and 573–595; these read FHCS…GRAH, HECT…LRLH, YLCV…RRAH, HRCR…RRTH, LPCP…RAVH, HRCG…LRTH, FQCH…QLTH, YQCL…RRLH, and YYCG…QRVH. A disordered region spans residues 409–443; that stretch reads HAGKSGAPPTGATAPPAPAEPTPPPPPPAPPAQLP. Residues 423-442 are compositionally biased toward pro residues; the sequence is PPAPAEPTPPPPPPAPPAQL. A disordered region spans residues 601 to 621; that stretch reads LTLQPPRSPSPAPPPPPEPQQ. Pro residues predominate over residues 606 to 619; that stretch reads PRSPSPAPPPPPEP.

Belongs to the krueppel C2H2-type zinc-finger protein family. In terms of tissue distribution, widely expressed.

It localises to the nucleus. In terms of biological role, may be involved in transcriptional regulation. The polypeptide is Zinc finger protein 526 (ZNF526) (Homo sapiens (Human)).